Consider the following 491-residue polypeptide: Ketol-acid reductoisomerase (NADP(+)) (491 aa).

A KARI N-terminal Rossmann domain is found at 14 to 208 (LDQLGRCRFM…GGHRAGVLES (195 aa)). Residues 45–48 (CGAQ), R68, R76, S78, and 108–110 (DKQ) each bind NADP(+). H132 is a catalytic residue. Residue G158 participates in NADP(+) binding. KARI C-terminal knotted domains follow at residues 209–344 (SFVA…NAPK) and 345–485 (YEGK…MTDM). Residues D217, E221, E389, and E393 each contribute to the Mg(2+) site. S414 is a substrate binding site.

This sequence belongs to the ketol-acid reductoisomerase family. Mg(2+) is required as a cofactor.

It catalyses the reaction (2R)-2,3-dihydroxy-3-methylbutanoate + NADP(+) = (2S)-2-acetolactate + NADPH + H(+). The enzyme catalyses (2R,3R)-2,3-dihydroxy-3-methylpentanoate + NADP(+) = (S)-2-ethyl-2-hydroxy-3-oxobutanoate + NADPH + H(+). The protein operates within amino-acid biosynthesis; L-isoleucine biosynthesis; L-isoleucine from 2-oxobutanoate: step 2/4. It functions in the pathway amino-acid biosynthesis; L-valine biosynthesis; L-valine from pyruvate: step 2/4. Functionally, involved in the biosynthesis of branched-chain amino acids (BCAA). Catalyzes an alkyl-migration followed by a ketol-acid reduction of (S)-2-acetolactate (S2AL) to yield (R)-2,3-dihydroxy-isovalerate. In the isomerase reaction, S2AL is rearranged via a Mg-dependent methyl migration to produce 3-hydroxy-3-methyl-2-ketobutyrate (HMKB). In the reductase reaction, this 2-ketoacid undergoes a metal-dependent reduction by NADPH to yield (R)-2,3-dihydroxy-isovalerate. This chain is Ketol-acid reductoisomerase (NADP(+)), found in Pasteurella multocida (strain Pm70).